We begin with the raw amino-acid sequence, 337 residues long: Glyceraldehyde-3-phosphate dehydrogenase (337 aa).

Residues Thr11–Ile12 and Gly111 each bind NAD(+). Ser140–Asn142 is a binding site for D-glyceraldehyde 3-phosphate. Cys141 acts as the Nucleophile in catalysis. An NAD(+)-binding site is contributed by Arg169. The interval Lys177–Pro196 is disordered. His194–Gly195 is a D-glyceraldehyde 3-phosphate binding site. An NAD(+)-binding site is contributed by Gln301.

This sequence belongs to the glyceraldehyde-3-phosphate dehydrogenase family. In terms of assembly, homotetramer.

The protein resides in the cytoplasm. The catalysed reaction is D-glyceraldehyde 3-phosphate + phosphate + NADP(+) = (2R)-3-phospho-glyceroyl phosphate + NADPH + H(+). It carries out the reaction D-glyceraldehyde 3-phosphate + phosphate + NAD(+) = (2R)-3-phospho-glyceroyl phosphate + NADH + H(+). It functions in the pathway carbohydrate degradation; glycolysis; pyruvate from D-glyceraldehyde 3-phosphate: step 1/5. The chain is Glyceraldehyde-3-phosphate dehydrogenase from Methanosphaera stadtmanae (strain ATCC 43021 / DSM 3091 / JCM 11832 / MCB-3).